Reading from the N-terminus, the 445-residue chain is tRNA modification GTPase MnmE (445 aa).

Residues Arg20, Glu79, and Lys119 each coordinate (6S)-5-formyl-5,6,7,8-tetrahydrofolate. The TrmE-type G domain occupies Gly215–Glu371. Asn225 serves as a coordination point for K(+). GTP-binding positions include Asn225 to Ser230, Ser244 to Thr250, and Asp269 to Gly272. Position 229 (Ser229) interacts with Mg(2+). K(+) contacts are provided by Ser244, Ile246, and Thr249. A Mg(2+)-binding site is contributed by Thr250. Lys445 is a binding site for (6S)-5-formyl-5,6,7,8-tetrahydrofolate.

The protein belongs to the TRAFAC class TrmE-Era-EngA-EngB-Septin-like GTPase superfamily. TrmE GTPase family. As to quaternary structure, homodimer. Heterotetramer of two MnmE and two MnmG subunits. It depends on K(+) as a cofactor.

It is found in the cytoplasm. In terms of biological role, exhibits a very high intrinsic GTPase hydrolysis rate. Involved in the addition of a carboxymethylaminomethyl (cmnm) group at the wobble position (U34) of certain tRNAs, forming tRNA-cmnm(5)s(2)U34. In Rickettsia conorii (strain ATCC VR-613 / Malish 7), this protein is tRNA modification GTPase MnmE.